Reading from the N-terminus, the 114-residue chain is Beta-microseminoprotein E1 (114 aa).

An N-terminal signal peptide occupies residues M1 to G20. 5 disulfides stabilise this stretch: C22-C70, C38-C62, C57-C93, C60-C69, and C84-C107.

This sequence belongs to the beta-microseminoprotein family.

The protein resides in the secreted. This chain is Beta-microseminoprotein E1 (MSPE), found in Saguinus oedipus (Cotton-top tamarin).